Here is a 209-residue protein sequence, read N- to C-terminus: Pyridoxal phosphate homeostasis protein (209 aa).

Lys-31 bears the N6-(pyridoxal phosphate)lysine mark.

Belongs to the pyridoxal phosphate-binding protein YggS/PROSC family.

Pyridoxal 5'-phosphate (PLP)-binding protein, which is involved in PLP homeostasis. This is Pyridoxal phosphate homeostasis protein from Deinococcus radiodurans (strain ATCC 13939 / DSM 20539 / JCM 16871 / CCUG 27074 / LMG 4051 / NBRC 15346 / NCIMB 9279 / VKM B-1422 / R1).